The sequence spans 210 residues: Large ribosomal subunit protein uL4 (210 aa).

Positions 57–78 (VSGGGAKPWKQKGTGRARAGSN) are disordered.

The protein belongs to the universal ribosomal protein uL4 family. As to quaternary structure, part of the 50S ribosomal subunit.

In terms of biological role, one of the primary rRNA binding proteins, this protein initially binds near the 5'-end of the 23S rRNA. It is important during the early stages of 50S assembly. It makes multiple contacts with different domains of the 23S rRNA in the assembled 50S subunit and ribosome. Forms part of the polypeptide exit tunnel. The polypeptide is Large ribosomal subunit protein uL4 (Desulfovibrio desulfuricans (strain ATCC 27774 / DSM 6949 / MB)).